The primary structure comprises 748 residues: MRVGCCLLLKPLRQRLCTASISSRHIMRWCATSSSNINSTETAAKMPDDDVSGSLSAPSLLKYKIEPSTATMGAPRPPHDDDRAFCTLASFPPSHIRNVAVVAHVDHGKTTLSDAILRRTGVLSGSQVGTYTDRLLVERERGITIKAQTCSIFVVWDGEEFLLNLIDTPGHVDFQYEVSRSLSASDAALLLVDAAQGIEAQTMAHFHMALDRGLTILPVLTKMDAVLSDAPVDRALQDLEDSTGLLRREVLFTSAKEQLGIEALLHAIIERVPPPTGLLGLSDLQQLPPLLPGSAERVAMEEKMVPLRALLFDSWTSECGGGLRRPAPRGGEKVNSGNDNDRNLICLVRIIDGTLTAKTVVTFYQSQRRCEALEVGIIHPELRPTAALTAGMVGYVVFSQVRGEEFLVGETLYTLPTRKFARENIVPVPGFRRVQPVVFAGFYPDEGEYITQLREAVEKLRVNEPAVTMEPLDCPALGSGLQLGFLGMLHMQVFQERLLAEFGQRVLVTPPLVQYKYREAGSDEEEPLKPLTVHTWKWIHEGAACYLEPYVTATIITRREHFQAIDGEALRRFRGEQLDMRVLDDARVLVRYKMPLADLARGFFAVVKSLSHGYASLDYGDPVYEEADLVKVDVLVQKSRISALSVICLRSEAPSIGKRIVSSLKSNLTRTAVDIPLQAMVGSKIVARETVKAYRKDVTAKIHAGDISRKQKKWNDQKKGKERMARRTVGAVTLDQSILAAAMGAISL.

Residues 1 to 29 constitute a mitochondrion transit peptide; sequence MRVGCCLLLKPLRQRLCTASISSRHIMRW. Residues 94–276 enclose the tr-type G domain; that stretch reads SHIRNVAVVA…AIIERVPPPT (183 aa). Residues 103-110, 167-171, and 221-224 each bind GTP; these read AHVDHGKT, DTPGH, and TKMD.

The protein belongs to the TRAFAC class translation factor GTPase superfamily. Classic translation factor GTPase family. LepA subfamily.

Its subcellular location is the mitochondrion inner membrane. It catalyses the reaction GTP + H2O = GDP + phosphate + H(+). Promotes mitochondrial protein synthesis. May act as a fidelity factor of the translation reaction, by catalyzing a one-codon backward translocation of tRNAs on improperly translocated ribosomes. Binds to mitochondrial ribosomes in a GTP-dependent manner. This Trypanosoma cruzi (strain CL Brener) protein is Translation factor GUF1 homolog 2, mitochondrial.